Here is a 309-residue protein sequence, read N- to C-terminus: D-alanine--D-alanine ligase (309 aa).

One can recognise an ATP-grasp domain in the interval 105–304 (KQIWHSVGLP…FNDLVERILA (200 aa)). 135–190 (LQELGGRVIVKPAREGSSIGMSIADNGRSLALALQHAAEFDDDLLVEQWVEGAEYT) is a binding site for ATP. Residues D258, E271, and N273 each coordinate Mg(2+).

The protein belongs to the D-alanine--D-alanine ligase family. Mg(2+) is required as a cofactor. The cofactor is Mn(2+).

It localises to the cytoplasm. The enzyme catalyses 2 D-alanine + ATP = D-alanyl-D-alanine + ADP + phosphate + H(+). The protein operates within cell wall biogenesis; peptidoglycan biosynthesis. Cell wall formation. This is D-alanine--D-alanine ligase from Idiomarina loihiensis (strain ATCC BAA-735 / DSM 15497 / L2-TR).